The sequence spans 375 residues: tRNA-specific 2-thiouridylase MnmA (375 aa).

Residues 17–24 (GMSGGVDS) and Met-43 contribute to the ATP site. Residues 103–105 (NPD) are interaction with target base in tRNA. Cys-108 acts as the Nucleophile in catalysis. A disulfide bridge links Cys-108 with Cys-204. Gly-132 provides a ligand contact to ATP. Positions 154–156 (KDQ) are interaction with tRNA. Cys-204 acts as the Cysteine persulfide intermediate in catalysis. Residues 316–317 (RY) are interaction with tRNA.

The protein belongs to the MnmA/TRMU family.

Its subcellular location is the cytoplasm. It carries out the reaction S-sulfanyl-L-cysteinyl-[protein] + uridine(34) in tRNA + AH2 + ATP = 2-thiouridine(34) in tRNA + L-cysteinyl-[protein] + A + AMP + diphosphate + H(+). Its function is as follows. Catalyzes the 2-thiolation of uridine at the wobble position (U34) of tRNA, leading to the formation of s(2)U34. This is tRNA-specific 2-thiouridylase MnmA from Stutzerimonas stutzeri (strain A1501) (Pseudomonas stutzeri).